The following is a 479-amino-acid chain: Caspase-8 (479 aa).

A propeptide spanning residues methionine 1–aspartate 216 is cleaved from the precursor. 2 consecutive DED domains span residues aspartate 2–asparagine 80 and alanine 100–aspartate 177. Phosphoserine occurs at positions 188 and 211. Position 224 is an N6-acetyllysine (lysine 224). Histidine 317 is a catalytic residue. Tyrosine 334 bears the Phosphotyrosine mark. Cysteine 360 is a catalytic residue. The propeptide occupies serine 375–aspartate 384. Tyrosine 380 bears the Phosphotyrosine; by SRC mark. Serine 387 carries the post-translational modification Phosphoserine; by CDK1. Arginine 413 is subject to (Microbial infection) ADP-riboxanated arginine.

Belongs to the peptidase C14A family. As to quaternary structure, heterotetramer that consists of two anti-parallel arranged heterodimers, each one formed by a 18 kDa (p18) and a 10 kDa (p10) subunit. Component of the death-induced signaling complex (DISC) composed of cell surface receptor FAS/CD95 or TNFRSF1A, adapter protein FADD and the CASP8 protease; recruitment of CASP8 to the complex is required for processing of CASP8 into the p18 and p10 subunits. Component of the AIM2 PANoptosome complex, a multiprotein complex that drives inflammatory cell death (PANoptosis). Interacts with CFLAR and PEA15. Interacts with TNFAIP8L2. Interacts with CASP8AP2. Interacts with RFFL and RNF34; negatively regulate CASP8 through proteasomal degradation. Interacts with NOL3; decreases CASP8 activity in a mitochondria localization- and phosphorylation-dependent manner and this interaction is dissociated by calcium. Interacts with UBR2ca. Interacts with RIPK1. Interacts with stimulated TNFRSF10B; this interaction is followed by CASP8 proteolytic cleavage and activation. Interacts (phosphorylated on Tyr-380) with PIK3R1. Interacts at the endoplasmic reticulum with a complex containing BCAP31, BAP29, BCL2 and/or BCL2L1. In terms of assembly, (Microbial infection) Interacts with human cytomegalovirus/HHV-5 protein vICA/UL36; this interaction inhibits CASP8 activation. As to quaternary structure, (Microbial infection) Interacts with NleF from pathogenic E.coli. (Microbial infection) Interacts with molluscum contagiosum virus protein MC160. In terms of assembly, (Microbial infection) Interacts (via RIP homotypic interaction motif) with herpes simplex virus 1/HHV-1 protein RIR1/ICP6 (via RIP homotypic interaction motif); this interaction prevents necroptosis activation. As to quaternary structure, (Microbial infection) Interacts (via RIP homotypic interaction motif) with herpes simplex virus 2/HHV-2 protein RIR1/ICP10 (via RIP homotypic interaction motif); this interaction prevents necroptosis activation. In terms of processing, generation of the p10 and p18 subunits requires association with the death-inducing signaling complex (DISC), whereas additional processing is likely due to the autocatalytic activity of the activated protease. GZMB and CASP10 can be involved in these processing events. Phosphorylation on Ser-387 during mitosis by CDK1 inhibits activation by proteolysis and prevents apoptosis. Phosphorylation on Tyr-380 by SRC is mediated by interaction with the SRC SH2 domain and does not affect dimerization or recruitment to the death-inducing signaling complex (DISC) but negatively regulates DISC-mediated processing and activation of CASP8, down-regulating its proapoptotic function. Phosphorylation on Tyr-380 also enhances localization to lamellipodia in migrating cells. Post-translationally, (Microbial infection) ADP-riboxanation by C.violaceum CopC blocks CASP8 processing, preventing CASP8 activation and ability to mediate extrinsic apoptosis. In terms of processing, (Microbial infection) Proteolytically cleaved by the cowpox virus CRMA death inhibitory protein. In terms of tissue distribution, isoform 1, isoform 5 and isoform 7 are expressed in a wide variety of tissues. Highest expression in peripheral blood leukocytes, spleen, thymus and liver. Barely detectable in brain, testis and skeletal muscle.

The protein resides in the cytoplasm. Its subcellular location is the nucleus. It localises to the cell projection. It is found in the lamellipodium. It carries out the reaction Strict requirement for Asp at position P1 and has a preferred cleavage sequence of (Leu/Asp/Val)-Glu-Thr-Asp-|-(Gly/Ser/Ala).. Its activity is regulated as follows. CASP8 activity is restricted by RIPK1. Inhibited by the effector protein NleF that is produced by pathogenic E.coli; this inhibits apoptosis. Its function is as follows. Thiol protease that plays a key role in programmed cell death by acting as a molecular switch for apoptosis, necroptosis and pyroptosis, and is required to prevent tissue damage during embryonic development and adulthood. Initiator protease that induces extrinsic apoptosis by mediating cleavage and activation of effector caspases responsible for FAS/CD95-mediated and TNFRSF1A-induced cell death. Cleaves and activates effector caspases CASP3, CASP4, CASP6, CASP7, CASP9 and CASP10. Binding to the adapter molecule FADD recruits it to either receptor FAS/TNFRSF6 or TNFRSF1A. The resulting aggregate called the death-inducing signaling complex (DISC) performs CASP8 proteolytic activation. The active dimeric enzyme is then liberated from the DISC and free to activate downstream apoptotic proteases. Proteolytic fragments of the N-terminal propeptide (termed CAP3, CAP5 and CAP6) are likely retained in the DISC. In addition to extrinsic apoptosis, also acts as a negative regulator of necroptosis: acts by cleaving RIPK1 at 'Asp-324', which is crucial to inhibit RIPK1 kinase activity, limiting TNF-induced apoptosis, necroptosis and inflammatory response. Also able to initiate pyroptosis by mediating cleavage and activation of gasdermin-C and -D (GSDMC and GSDMD, respectively): gasdermin cleavage promotes release of the N-terminal moiety that binds to membranes and forms pores, triggering pyroptosis. Initiates pyroptosis following inactivation of MAP3K7/TAK1. Also acts as a regulator of innate immunity by mediating cleavage and inactivation of N4BP1 downstream of TLR3 or TLR4, thereby promoting cytokine production. May participate in the Granzyme B (GZMB) cell death pathways. Cleaves PARP1 and PARP2. Independent of its protease activity, promotes cell migration following phosphorylation at Tyr-380. Functionally, lacks the catalytic site and may interfere with the pro-apoptotic activity of the complex. Lacks the catalytic site and may interfere with the pro-apoptotic activity of the complex. Acts as an inhibitor of the caspase cascade. This is Caspase-8 from Homo sapiens (Human).